Consider the following 477-residue polypeptide: Transmembrane and coiled-coil domain protein 3 (477 aa).

Residues 1-24 (MPGSDTALTVDRTYSDPGRHHRCK) are disordered. Ser46 carries the post-translational modification Phosphoserine. Coiled coils occupy residues 63–83 (KVKL…EQIK) and 112–149 (KQVF…NGVT). A disordered region spans residues 234-280 (ASPRAYGGSATIVNKPKYGSDDECSSGTSGSADSNGNQSFGAGGTST). Ser253 bears the Phosphoserine mark. The span at 258–280 (SSGTSGSADSNGNQSFGAGGTST) shows a compositional bias: polar residues. The stretch at 284 to 398 (QGKIAKIMEE…KLELHQQEQQ (115 aa)) forms a coiled coil. The next 2 helical transmembrane spans lie at 409–429 (VLLG…LVCV) and 450–470 (FFAV…LCAI).

Belongs to the TEX28 family. In terms of assembly, may form homodimers and heterodimers with TMCC2 or TMCC3 via the coiled-coil domains. Interacts with ribosomal proteins RPL4 and RPS6.

It is found in the endoplasmic reticulum membrane. This chain is Transmembrane and coiled-coil domain protein 3, found in Mus musculus (Mouse).